A 348-amino-acid polypeptide reads, in one-letter code: tRNA N6-adenosine threonylcarbamoyltransferase (348 aa).

Fe cation contacts are provided by His-109 and His-113. Residues 136–140 (TVSGG), Asp-169, Gly-182, Asp-186, and Asn-284 contribute to the substrate site. Asp-312 is a Fe cation binding site.

This sequence belongs to the KAE1 / TsaD family. The cofactor is Fe(2+).

The protein localises to the cytoplasm. It carries out the reaction L-threonylcarbamoyladenylate + adenosine(37) in tRNA = N(6)-L-threonylcarbamoyladenosine(37) in tRNA + AMP + H(+). Its function is as follows. Required for the formation of a threonylcarbamoyl group on adenosine at position 37 (t(6)A37) in tRNAs that read codons beginning with adenine. Is involved in the transfer of the threonylcarbamoyl moiety of threonylcarbamoyl-AMP (TC-AMP) to the N6 group of A37, together with TsaE and TsaB. TsaD likely plays a direct catalytic role in this reaction. This chain is tRNA N6-adenosine threonylcarbamoyltransferase, found in Chlorobium luteolum (strain DSM 273 / BCRC 81028 / 2530) (Pelodictyon luteolum).